The following is a 222-amino-acid chain: Ribosomal RNA small subunit methyltransferase I (222 aa).

Belongs to the methyltransferase superfamily. RsmI family.

It is found in the cytoplasm. It carries out the reaction cytidine(1402) in 16S rRNA + S-adenosyl-L-methionine = 2'-O-methylcytidine(1402) in 16S rRNA + S-adenosyl-L-homocysteine + H(+). In terms of biological role, catalyzes the 2'-O-methylation of the ribose of cytidine 1402 (C1402) in 16S rRNA. The sequence is that of Ribosomal RNA small subunit methyltransferase I from Mycoplasmopsis pulmonis (strain UAB CTIP) (Mycoplasma pulmonis).